Here is a 397-residue protein sequence, read N- to C-terminus: Protein Mx1 (397 aa).

This sequence belongs to the TRAFAC class dynamin-like GTPase superfamily. Dynamin/Fzo/YdjA family.

The sequence is that of Protein Mx1 (Mx1) from Mus musculus (Mouse).